Reading from the N-terminus, the 382-residue chain is Alkanesulfonate monooxygenase (382 aa).

It belongs to the SsuD family.

It catalyses the reaction an alkanesulfonate + FMNH2 + O2 = an aldehyde + FMN + sulfite + H2O + 2 H(+). Catalyzes the desulfonation of aliphatic sulfonates. The sequence is that of Alkanesulfonate monooxygenase from Pseudomonas putida (strain GB-1).